The following is a 51-amino-acid chain: MKKFELYEVKDGKLVRKNPFCVRCSNGVFMADHGDRYACGKCGYTEWKNRE.

Zn(2+) is bound by residues C21, C24, C39, and C42. The C4-type zinc finger occupies 21–42; sequence CVRCSNGVFMADHGDRYACGKC.

Belongs to the eukaryotic ribosomal protein eS31 family. As to quaternary structure, part of the 30S ribosomal subunit. Requires Zn(2+) as cofactor.

In Methanothermobacter thermautotrophicus (strain ATCC 29096 / DSM 1053 / JCM 10044 / NBRC 100330 / Delta H) (Methanobacterium thermoautotrophicum), this protein is Small ribosomal subunit protein eS31.